The following is a 63-amino-acid chain: Large ribosomal subunit protein bL35 (63 aa).

A compositionally biased stretch (basic residues) spans 1-43 (MKMRTHSGAKKRLKVLSSGKVKKKSTRMRHLNSHMSSKTKRQL). The interval 1–45 (MKMRTHSGAKKRLKVLSSGKVKKKSTRMRHLNSHMSSKTKRQLGK) is disordered.

This sequence belongs to the bacterial ribosomal protein bL35 family.

The chain is Large ribosomal subunit protein bL35 from Bdellovibrio bacteriovorus (strain ATCC 15356 / DSM 50701 / NCIMB 9529 / HD100).